The primary structure comprises 93 residues: MGSLSPWHWAILAVVVILLFGAKKLPDAARSLGKSMRIFKSELREMQSENKTETSALGAQSESSAANPTPVQSQRVDPPAPSEQGHSEARPAS.

Residues 1 to 21 (MGSLSPWHWAILAVVVILLFG) traverse the membrane as a helical segment. The disordered stretch occupies residues 45–93 (EMQSENKTETSALGAQSESSAANPTPVQSQRVDPPAPSEQGHSEARPAS). The span at 53–75 (ETSALGAQSESSAANPTPVQSQR) shows a compositional bias: polar residues.

Belongs to the TatA/E family. In terms of assembly, the Tat system comprises two distinct complexes: a TatABC complex, containing multiple copies of TatA, TatB and TatC subunits, and a separate TatA complex, containing only TatA subunits. Substrates initially bind to the TatABC complex, which probably triggers association of the separate TatA complex to form the active translocon.

It localises to the cell membrane. Its function is as follows. Part of the twin-arginine translocation (Tat) system that transports large folded proteins containing a characteristic twin-arginine motif in their signal peptide across membranes. TatA could form the protein-conducting channel of the Tat system. In Mycolicibacterium paratuberculosis (strain ATCC BAA-968 / K-10) (Mycobacterium paratuberculosis), this protein is Sec-independent protein translocase protein TatA.